Here is a 214-residue protein sequence, read N- to C-terminus: 3-isopropylmalate dehydratase small subunit (214 aa).

It belongs to the LeuD family. LeuD type 1 subfamily. Heterodimer of LeuC and LeuD.

The catalysed reaction is (2R,3S)-3-isopropylmalate = (2S)-2-isopropylmalate. It functions in the pathway amino-acid biosynthesis; L-leucine biosynthesis; L-leucine from 3-methyl-2-oxobutanoate: step 2/4. In terms of biological role, catalyzes the isomerization between 2-isopropylmalate and 3-isopropylmalate, via the formation of 2-isopropylmaleate. The chain is 3-isopropylmalate dehydratase small subunit from Nitrosococcus oceani (strain ATCC 19707 / BCRC 17464 / JCM 30415 / NCIMB 11848 / C-107).